The sequence spans 296 residues: MQINLITGISGSGKSVALRAFEDAGYDCVDNLPVSLLVNLIITLEKEQCERVAVAIDARRGQSIADLPSTLENLRKSHQVRIVFLNADTNTLIQRFSETRRRHPLSTNAKQPQSATLIEAIDKERNLLEPLRAQAHSIDTSNIPAHALRSWIQDLLKDKPIGLTVVFESFGFKKGVPSEANLVFDVRCLPNPHYDKVLRPLTGNDKPVKEFLEKIPEVVNMEADITQFIHRWLPHYIADGRSYLTVAIGCTGGQHRSVYLVNRLSEYFRKQKDFGILQLNFLDRHRELDSIPVAKS.

ATP is bound at residue 8–15 (GISGSGKS). 57–60 (DARR) contacts GTP.

Belongs to the RapZ-like family.

In terms of biological role, displays ATPase and GTPase activities. In Polynucleobacter necessarius subsp. necessarius (strain STIR1), this protein is Nucleotide-binding protein Pnec_1620.